We begin with the raw amino-acid sequence, 117 residues long: Translation initiation factor 1A (117 aa).

In terms of domain architecture, S1-like spans Ile-17–Thr-92.

Belongs to the eIF-1A family.

Functionally, seems to be required for maximal rate of protein biosynthesis. Enhances ribosome dissociation into subunits and stabilizes the binding of the initiator Met-tRNA(I) to 40 S ribosomal subunits. The protein is Translation initiation factor 1A of Thermococcus kodakarensis (strain ATCC BAA-918 / JCM 12380 / KOD1) (Pyrococcus kodakaraensis (strain KOD1)).